The sequence spans 563 residues: Secreted lipase ARB07186/07185 (563 aa).

Positions 1–20 (MAKYDFVMLWILTLTAAIAA) are cleaved as a signal peptide. The cysteines at positions 83 and 101 are disulfide-linked. The Acyl-ester intermediate role is filled by serine 215. An intrachain disulfide couples cysteine 268 to cysteine 281.

The protein belongs to the type-B carboxylesterase/lipase family.

The protein localises to the secreted. It catalyses the reaction a triacylglycerol + H2O = a diacylglycerol + a fatty acid + H(+). This chain is Secreted lipase ARB07186/07185, found in Arthroderma benhamiae (strain ATCC MYA-4681 / CBS 112371) (Trichophyton mentagrophytes).